The following is a 537-amino-acid chain: MDALSQAISSGISVPYKNNSSSLVPSHGLTSLILRKSRSPVNPSSRSRVSVRASEIQHSKTSASSIDLSDPDWKLKYEKDFEQRFSIPHITDVLPDAEAIRSTFCLKMRSPTEDFVGGYPSDEEWHGYINNNDRVLLKVISYSSPTSAGAECLDHDCSWVEQWIHRAGPREKIYFRPEEVKAAIITCGGLCPGLNDVIRHIVITLEIYGVKNIVGIPFGYRGFSDKDLTEMPLSRKVVQNIHLSGGSLLGVSRGGPSVSEIVDSMEERGINMLFVLGGNGTHAGANAIHNECRKRKIKVAVVGVPKTIDNDILHMDKTFGFDTAVEEAQRAINSAYIEAHSAYHGIGVVKLMGRNSGFIAMQASLASGQVDICLIPEVPFNLHGPNGVLKHLKYLIETKGSAVICVAEGAGQNFLEKTNAKDASGNAVLGDFGVYIQQETKKYFKEISTPIDVKYIDPTYMIRAVRANASDGILCTVLGQNAVHGAFAGYSGITVGIINTHYAYLPITEVIAYPKSVDPNSRMWHRCLTSTGQPDFI.

The transit peptide at 1–52 (MDALSQAISSGISVPYKNNSSSLVPSHGLTSLILRKSRSPVNPSSRSRVSVR) directs the protein to the chloroplast. Residues 35-64 (RKSRSPVNPSSRSRVSVRASEIQHSKTSAS) form a disordered region. Low complexity predominate over residues 39–54 (SPVNPSSRSRVSVRAS). At Ser-147 the chain carries Phosphoserine. ATP-binding positions include Gly-189, 253–254 (RG), and 278–281 (GNGT). Residue Asn-279 participates in Mg(2+) binding. Residues 307-309 (TID), 352-354 (MGR), Glu-408, and 460-463 (YMIR) contribute to the substrate site. Asp-309 serves as the catalytic Proton acceptor.

Belongs to the phosphofructokinase type A (PFKA) family. PPi-dependent PFK group II subfamily. Atypical ATP-dependent clade 'X' sub-subfamily. In terms of assembly, homotetramer. The cofactor is Mg(2+). In terms of tissue distribution, expressed in roots, leaves, stems and flowers.

It localises to the plastid. Its subcellular location is the chloroplast. It catalyses the reaction beta-D-fructose 6-phosphate + ATP = beta-D-fructose 1,6-bisphosphate + ADP + H(+). It functions in the pathway carbohydrate degradation; glycolysis; D-glyceraldehyde 3-phosphate and glycerone phosphate from D-glucose: step 3/4. Its activity is regulated as follows. Allosterically activated by AMP. Catalyzes the phosphorylation of D-fructose 6-phosphate to fructose 1,6-bisphosphate by ATP, the first committing step of glycolysis. The sequence is that of ATP-dependent 6-phosphofructokinase 5, chloroplastic from Arabidopsis thaliana (Mouse-ear cress).